Reading from the N-terminus, the 1375-residue chain is MVPGEENQLVPKEDVFWRCRQNIFDEMKKKFLQIENAAEEPRVLCIIQDTTNSKTVNERITLNLPASTPVRKLFEDVANKVGYINGTFDLVWGNGINTADMAPLDHTSDKSLLDANFEPGKKNFLHLTDKDGEQPQILLEDSSAGEDSVHDRFIGPLPREGSGGSTSDYVSQSYSYSSILNKSETGYVGLVNQAMTCYLNSLLQTLFMTPEFRNALYKWEFEESEEDPVTSIPYQLQRLFVLLQTSKKRAIETTDVTRSFGWDSSEAWQQHDVQELCRVMFDALEQKWKQTEQADLINELYQGKLKDYVRCLECGYEGWRIDTYLDIPLVIRPYGSSQAFASVEEALHAFIQPEILDGPNQYFCERCKKKCDARKGLRFLHFPYLLTLQLKRFDFDYTTMHRIKLNDRMTFPEELDMSTFIDVEDEKSPQTESCTDSGAENEGSCHSDQMSNDFSNDDGVDEGICLETNSGTEKISKSGLEKNSLIYELFSVMVHSGSAAGGHYYACIKSFSDEQWYSFNDQHVSRITQEDIKKTHGGSSGSRGYYSSAFASSTNAYMLIYRLKDPARNAKFLEVDEYPEHIKNLVQKERELEEQEKRQREIERNTCKIKLFCLHPTKQVMMENKLEVHKDKTLKEAVEMAYKMMDLEEVIPLDCCRLVKYDEFHDYLERSYEGEEDTPMGLLLGGVKSTYMFDLLLETRKPDQVFQSYKPGEVMVKVHVVDLKAESVAAPITVRAYLNQTVTEFKQLISKAIHLPAETMRIVLERCYNDLRLLSVSSKTLKAEGFFRSNKVFVESSETLDYQMAFADSHLWKLLDRHANTIRLFVLLPEQSPVSYSKRTAYQKAGGDSGNVDDDCERVKGPVGSLKSVEAILEESTEKLKSLSLQQQQDGDNGDSSKSTETSDFENIESPLNERDSSASVDNRELEQHIQTSDPENFQSEERSDSDVNNDRSTSSVDSDILSSSHSSDTLCNADNAQIPLANGLDSHSITSSRRTKANEGKKETWDTAEEDSGTDSEYDESGKSRGEMQYMYFKAEPYAADEGSGEGHKWLMVHVDKRITLAAFKQHLEPFVGVLSSHFKVFRVYASNQEFESVRLNETLSSFSDDNKITIRLGRALKKGEYRVKVYQLLVNEQEPCKFLLDAVFAKGMTVRQSKEELIPQLREQCGLELSIDRFRLRKKTWKNPGTVFLDYHIYEEDINISSNWEVFLEVLDGVEKMKSMSQLAVLSRRWKPSEMKLDPFQEVVLESSSVDELREKLSEISGIPLDDIEFAKGRGTFPCDISVLDIHQDLDWNPKVSTLNVWPLYICDDGAVIFYRDKTEELMELTDEQRNELMKKESSRLQKTGHRVTYSPRKEKALKIYLDGAPNKDLTQD.

N6-acetyllysine is present on lysine 122. A USP domain is found at 188–564; the sequence is VGLVNQAMTC…NAYMLIYRLK (377 aa). Cysteine 197 (nucleophile) is an active-site residue. A disordered region spans residues 425 to 452; that stretch reads DEKSPQTESCTDSGAENEGSCHSDQMSN. Residues 430–452 are compositionally biased toward polar residues; sequence QTESCTDSGAENEGSCHSDQMSN. Histidine 503 (proton acceptor) is an active-site residue. A Phosphoserine modification is found at serine 832. Disordered stretches follow at residues 840 to 859, 880 to 968, and 983 to 1024; these read TAYQ…CERV, LKSL…SHSS, and NGLD…ESGK. Low complexity predominate over residues 882–899; the sequence is SLSLQQQQDGDNGDSSKS. Serine 910 bears the Phosphoserine mark. Over residues 912 to 928 the composition is skewed to basic and acidic residues; the sequence is LNERDSSASVDNRELEQ. The span at 929 to 938 shows a compositional bias: polar residues; it reads HIQTSDPENF. Serine 933 is subject to Phosphoserine. Over residues 940 to 950 the composition is skewed to basic and acidic residues; sequence SEERSDSDVNN. A compositionally biased stretch (low complexity) spans 953 to 968; sequence STSSVDSDILSSSHSS. A compositionally biased stretch (basic and acidic residues) spans 997–1006; the sequence is KANEGKKETW. Residues 1007 to 1020 are compositionally biased toward acidic residues; it reads DTAEEDSGTDSEYD. Position 1013 is a phosphoserine (serine 1013). At threonine 1015 the chain carries Phosphothreonine. The residue at position 1017 (serine 1017) is a Phosphoserine.

Belongs to the peptidase C19 family. Interacts with BTRC and FBXW11. Interacts with POLB. In terms of tissue distribution, expressed in skeletal muscle, heart and testis.

It is found in the cytoplasm. The enzyme catalyses Thiol-dependent hydrolysis of ester, thioester, amide, peptide and isopeptide bonds formed by the C-terminal Gly of ubiquitin (a 76-residue protein attached to proteins as an intracellular targeting signal).. Its function is as follows. Ubiquitin-specific protease that specifically deubiquitinates monoubiquitinated DNA polymerase beta (POLB), stabilizing POLB thereby playing a role in base-excision repair (BER). Acts as a regulator of cell growth and genome integrity. May also indirectly regulate CDC25A expression at a transcriptional level. This Homo sapiens (Human) protein is Ubiquitin carboxyl-terminal hydrolase 47 (USP47).